An 88-amino-acid chain; its full sequence is FXYD domain-containing ion transport regulator 3 (88 aa).

The N-terminal stretch at 1 to 17 (MHEVALSVLILLAGLSA) is a signal peptide. Over 18–38 (LDANDPEDKNSPFYYDWHSLR) the chain is Extracellular. The helical transmembrane segment at 39-59 (VGGLICAGTPCALGIIILLSG) threads the bilayer. The Cytoplasmic portion of the chain corresponds to 60–88 (KCKCKFSQKPSHRPGDAPPLITPGSAHDC). Positions 66–88 (SQKPSHRPGDAPPLITPGSAHDC) are disordered.

It belongs to the FXYD family. As to quaternary structure, regulatory subunit of the sodium/potassium-transporting ATPase which is composed of a catalytic alpha subunit, a non-catalytic beta subunit and an additional regulatory subunit. Interacts with catalytic alpha subunit ATP1A1. Also interacts with non-catalytic beta subunit ATP1B1. Interacts with the alpha1-beta1, alpha2-beta1 and alpha3-beta1 NKA isozymes. In terms of processing, glutathionylated.

Its subcellular location is the cell membrane. In terms of biological role, associates with and regulates the activity of the sodium/potassium-transporting ATPase (NKA) which transports Na(+) out of the cell and K(+) into the cell. Reduces glutathionylation of the NKA beta-1 subunit ATP1B1, thus reversing glutathionylation-mediated inhibition of ATP1B1. Induces a hyperpolarization-activated chloride current when expressed in Xenopus oocytes. This Sus scrofa (Pig) protein is FXYD domain-containing ion transport regulator 3 (FXYD3).